A 330-amino-acid polypeptide reads, in one-letter code: Homeobox protein Hox-C13 (330 aa).

A compositionally biased stretch (gly residues) spans 30–47 (GGGGGGGGGTGGAGGGCS). A disordered region spans residues 30-50 (GGGGGGGGGTGGAGGGCSGAS). The segment at residues 260 to 319 (GRKKRVPYTKVQLKELEKEYAASKFITKEKRRRISATTNLSERQVTIWFQNRRVKEKKVV) is a DNA-binding region (homeobox).

The protein belongs to the Abd-B homeobox family.

The protein localises to the nucleus. Its function is as follows. Transcription factor which plays a role in hair follicle differentiation. Regulates FOXQ1 expression and that of other hair-specific genes. This Homo sapiens (Human) protein is Homeobox protein Hox-C13 (HOXC13).